The sequence spans 494 residues: MFKFASAVILCVVAASSTLAQHNPHWWGNRNTIVHLFEWKWDDIAAECENFLGPHGFAGVQVSPVNENIISSGRPWWERYQPISYKLTTRSGDEQDFGDMVRRCNDVGVRIYVDVLLNHMSGDFDGVAVGTAGTEAEPSKKSFPGVPYSAQDFHPSCEITDWNDRFQVQQCELVGLKDLDQSSDWVRSKLIEFLDHLIELGVAGFRVDAAKHMAADDLSYIYSSLSDLSTEHGFPHNARPFIFQEVIDHGHETVSREEYNTLGAVTEFRFSEEIGNAFRGNNALKWLQSWGTGWGFLPSGQALTFVDNHDNQRDMGAVLNYKSPKQYKMATAFHLAYPYGISRVMSSFAFDDHDTAPPQDAQERIISPEFDAEGACVNGWICEHRWRQIYAMVGFKNAVRDTELSNWWDNGDSQISFCRGNKGFLAVNNNLYDLSQDLQTCLPAGVYCDVISGSLVDGSCTGKSVTVDSNGYGYVHIGSDDFDGVLALHVDAKV.

Positions 1–20 (MFKFASAVILCVVAASSTLA) are cleaved as a signal peptide. Pyrrolidone carboxylic acid is present on Gln-21. A disulfide bridge links Cys-48 with Cys-104. Residues Asn-118, Gln-169, and Asp-178 each contribute to the Ca(2+) site. The cysteines at positions 157 and 171 are disulfide-linked. Arg-206 is a binding site for chloride. Asp-208 (nucleophile) is an active-site residue. Residue His-212 participates in Ca(2+) binding. The active-site Proton donor is the Glu-245. Residues Asn-308 and Arg-343 each contribute to the chloride site. Intrachain disulfides connect Cys-376–Cys-382, Cys-418–Cys-441, and Cys-448–Cys-460.

This sequence belongs to the glycosyl hydrolase 13 family. As to quaternary structure, monomer. Requires Ca(2+) as cofactor. It depends on chloride as a cofactor.

Its subcellular location is the secreted. The catalysed reaction is Endohydrolysis of (1-&gt;4)-alpha-D-glucosidic linkages in polysaccharides containing three or more (1-&gt;4)-alpha-linked D-glucose units.. The protein is Alpha-amylase-related protein (Amyrel) of Drosophila varians (Fruit fly).